The chain runs to 171 residues: Shikimate kinase (171 aa).

Residue glycine 14–threonine 19 coordinates ATP. Serine 18 provides a ligand contact to Mg(2+). Substrate-binding residues include aspartate 36, arginine 60, and glycine 82. An ATP-binding site is contributed by arginine 120. Arginine 139 contacts substrate. Glutamine 156 contacts ATP.

Belongs to the shikimate kinase family. In terms of assembly, monomer. Requires Mg(2+) as cofactor.

The protein resides in the cytoplasm. It catalyses the reaction shikimate + ATP = 3-phosphoshikimate + ADP + H(+). Its pathway is metabolic intermediate biosynthesis; chorismate biosynthesis; chorismate from D-erythrose 4-phosphate and phosphoenolpyruvate: step 5/7. Catalyzes the specific phosphorylation of the 3-hydroxyl group of shikimic acid using ATP as a cosubstrate. In Alteromonas mediterranea (strain DSM 17117 / CIP 110805 / LMG 28347 / Deep ecotype), this protein is Shikimate kinase.